Consider the following 884-residue polypeptide: Probable disease resistance protein At1g12290 (884 aa).

A coiled-coil region spans residues 26-66 (LYYIQNIKENLTSLEEAMEDLKALRDDLLRKVQTAEEGGLQ). The region spanning 139–443 (AHPATRAVGE…CEGFIDGDEN (305 aa)) is the NB-ARC domain. 182-189 (GMGGVGKT) lines the ATP pocket. LRR repeat units follow at residues 519 to 540 (VVSR…PECP), 541 to 563 (KLTT…FFRS), 566 to 588 (RLVV…ISEL), 590 to 612 (SLRY…LKLK), 613 to 635 (KLMH…DHLS), and 644 to 664 (NLRM…ENLE).

Belongs to the disease resistance NB-LRR family.

Functionally, probable disease resistance protein. The sequence is that of Probable disease resistance protein At1g12290 from Arabidopsis thaliana (Mouse-ear cress).